The chain runs to 92 residues: DNA-directed RNA polymerase subunit omega (92 aa).

Belongs to the RNA polymerase subunit omega family. The RNAP catalytic core consists of 2 alpha, 1 beta, 1 beta' and 1 omega subunit. When a sigma factor is associated with the core the holoenzyme is formed, which can initiate transcription.

The catalysed reaction is RNA(n) + a ribonucleoside 5'-triphosphate = RNA(n+1) + diphosphate. In terms of biological role, promotes RNA polymerase assembly. Latches the N- and C-terminal regions of the beta' subunit thereby facilitating its interaction with the beta and alpha subunits. The protein is DNA-directed RNA polymerase subunit omega of Shewanella baltica (strain OS223).